Here is a 392-residue protein sequence, read N- to C-terminus: 8-amino-7-oxononanoate synthase (392 aa).

Residue arginine 21 coordinates substrate. 108-109 is a binding site for pyridoxal 5'-phosphate; it reads GF. Position 133 (histidine 133) interacts with substrate. Residues serine 181, 206–209, and 237–240 each bind pyridoxal 5'-phosphate; these read DDAH and TLSK. Position 240 is an N6-(pyridoxal phosphate)lysine (lysine 240). Threonine 354 provides a ligand contact to substrate.

This sequence belongs to the class-II pyridoxal-phosphate-dependent aminotransferase family. BioF subfamily. In terms of assembly, homodimer. Pyridoxal 5'-phosphate is required as a cofactor.

The catalysed reaction is 6-carboxyhexanoyl-[ACP] + L-alanine + H(+) = (8S)-8-amino-7-oxononanoate + holo-[ACP] + CO2. The protein operates within cofactor biosynthesis; biotin biosynthesis. Catalyzes the decarboxylative condensation of pimeloyl-[acyl-carrier protein] and L-alanine to produce 8-amino-7-oxononanoate (AON), [acyl-carrier protein], and carbon dioxide. The polypeptide is 8-amino-7-oxononanoate synthase (Symbiobacterium thermophilum (strain DSM 24528 / JCM 14929 / IAM 14863 / T)).